A 301-amino-acid chain; its full sequence is Protein p34 (301 aa).

Helical transmembrane passes span 15–35 (YLSV…WVVT), 40–60 (ILAA…NLIA), 83–103 (TIFS…FSSV), 120–140 (TVMY…TYVI), and 171–191 (LSDY…LYIF).

It belongs to the cation diffusion facilitator (CDF) transporter (TC 2.A.4) family.

The protein localises to the cell membrane. In Rickettsia rickettsii (strain Sheila Smith), this protein is Protein p34 (p34).